The following is a 978-amino-acid chain: Peroxisomal ATPase PEX6 (978 aa).

Arg119 is subject to Omega-N-methylarginine. ATP is bound by residues 470–477 (GPPGSGKT) and 742–749 (GPPGTGKT).

It belongs to the AAA ATPase family. In terms of assembly, interacts with PEX1; forming the PEX1-PEX6 AAA ATPase complex, which is composed of a heterohexamer formed by a trimer of PEX1-PEX6 dimers. Interacts with PEX26; interaction is direct and promotes recruitment to peroxisomal membranes. Interacts with ZFAND6.

It is found in the cytoplasm. It localises to the cytosol. Its subcellular location is the peroxisome membrane. The protein resides in the cell projection. The protein localises to the cilium. It is found in the photoreceptor outer segment. It carries out the reaction ATP + H2O = ADP + phosphate + H(+). Component of the PEX1-PEX6 AAA ATPase complex, a protein dislocase complex that mediates the ATP-dependent extraction of the PEX5 receptor from peroxisomal membranes, an essential step for PEX5 recycling. Specifically recognizes PEX5 monoubiquitinated at 'Cys-11', and pulls it out of the peroxisome lumen through the PEX2-PEX10-PEX12 retrotranslocation channel. Extraction by the PEX1-PEX6 AAA ATPase complex is accompanied by unfolding of the TPR repeats and release of bound cargo from PEX5. The polypeptide is Peroxisomal ATPase PEX6 (Rattus norvegicus (Rat)).